The primary structure comprises 184 residues: dCTP deaminase (184 aa).

DCTP contacts are provided by residues 107–112 (KSTYAR), 131–133 (TLE), glutamine 152, tyrosine 166, and glutamine 176. Catalysis depends on glutamate 133, which acts as the Proton donor/acceptor.

It belongs to the dCTP deaminase family. Homotrimer.

It carries out the reaction dCTP + H2O + H(+) = dUTP + NH4(+). The protein operates within pyrimidine metabolism; dUMP biosynthesis; dUMP from dCTP (dUTP route): step 1/2. In terms of biological role, catalyzes the deamination of dCTP to dUTP. The protein is dCTP deaminase of Erythrobacter litoralis (strain HTCC2594).